Here is a 531-residue protein sequence, read N- to C-terminus: CTP synthase (531 aa).

The interval 1–267 (MTKYIFVTGG…DQIVCEHLRL (267 aa)) is amidoligase domain. S13 is a CTP binding site. S13 contributes to the UTP binding site. Position 14-19 (14-19 (SLGKGI)) interacts with ATP. Y54 lines the L-glutamine pocket. D71 is a binding site for ATP. 2 residues coordinate Mg(2+): D71 and E141. Residues 148–150 (DIE), 188–193 (KTKPTQ), and K224 contribute to the CTP site. Residues 188-193 (KTKPTQ) and K224 each bind UTP. 240 to 242 (RDA) lines the ATP pocket. The Glutamine amidotransferase type-1 domain occupies 292-531 (KIALVGKYVE…REFVRASLKE (240 aa)). G354 serves as a coordination point for L-glutamine. The active-site Nucleophile; for glutamine hydrolysis is the C381. L-glutamine-binding positions include 382–385 (LGMQ), E405, and R462. Active-site residues include H507 and E509.

This sequence belongs to the CTP synthase family. As to quaternary structure, homotetramer.

The enzyme catalyses UTP + L-glutamine + ATP + H2O = CTP + L-glutamate + ADP + phosphate + 2 H(+). It catalyses the reaction L-glutamine + H2O = L-glutamate + NH4(+). The catalysed reaction is UTP + NH4(+) + ATP = CTP + ADP + phosphate + 2 H(+). Its pathway is pyrimidine metabolism; CTP biosynthesis via de novo pathway; CTP from UDP: step 2/2. Its activity is regulated as follows. Allosterically activated by GTP, when glutamine is the substrate; GTP has no effect on the reaction when ammonia is the substrate. The allosteric effector GTP functions by stabilizing the protein conformation that binds the tetrahedral intermediate(s) formed during glutamine hydrolysis. Inhibited by the product CTP, via allosteric rather than competitive inhibition. Functionally, catalyzes the ATP-dependent amination of UTP to CTP with either L-glutamine or ammonia as the source of nitrogen. Regulates intracellular CTP levels through interactions with the four ribonucleotide triphosphates. The protein is CTP synthase of Geobacillus kaustophilus (strain HTA426).